We begin with the raw amino-acid sequence, 418 residues long: Torsin-4A-B (418 aa).

A helical transmembrane segment spans residues 128 to 144 (CLLLFVGIVCFQIFNAI). Position 200-207 (200-207 (GPSGVGKS)) interacts with ATP.

It belongs to the ClpA/ClpB family. Torsin subfamily.

The protein localises to the membrane. The polypeptide is Torsin-4A-B (tor4a-b) (Xenopus laevis (African clawed frog)).